We begin with the raw amino-acid sequence, 388 residues long: MRYFTAGESHGPRLTAIIEGVPAGLSLSAEDINIELKRRQGGYGRGGRMKIESDQVEITSGVRHGKTIGSPITLNVTNRDFKNWEQIMAAQDVEDKIKKQRRLTKPRPGHADLVGGMKYEFEDLRNVLERSSARETTMRVAVGAVAKKLLHELEIEVANHVVNFGRREISSPEHLSVQEIRETAGRSDLSIFDESQAEDLRTYIDQIKKAGDTIGGIIETRVEGVPAGLGSYVQYDRKLDAKIAGAVVSINAFKGVEFGLGFEAGKRPGSQVMDEIIWSENKGYTRSSNQLGGFEGGMTNGEQLIVRGVMKPIPTLYKPLMSIDTESHEPYKASVERSDPTALPAAGVVMENVVATVVAQEICDKFNSDTINELKKALVDYKKRLSEY.

Residues Arg-39 and Arg-45 each contribute to the NADP(+) site. Residues 130-132 (RSS), 251-252 (NA), Gly-296, 311-315 (KPIPT), and Arg-337 contribute to the FMN site.

Belongs to the chorismate synthase family. In terms of assembly, homotetramer. FMNH2 serves as cofactor.

The catalysed reaction is 5-O-(1-carboxyvinyl)-3-phosphoshikimate = chorismate + phosphate. It participates in metabolic intermediate biosynthesis; chorismate biosynthesis; chorismate from D-erythrose 4-phosphate and phosphoenolpyruvate: step 7/7. Functionally, catalyzes the anti-1,4-elimination of the C-3 phosphate and the C-6 proR hydrogen from 5-enolpyruvylshikimate-3-phosphate (EPSP) to yield chorismate, which is the branch point compound that serves as the starting substrate for the three terminal pathways of aromatic amino acid biosynthesis. This reaction introduces a second double bond into the aromatic ring system. This Lactococcus lactis subsp. cremoris (strain SK11) protein is Chorismate synthase.